The following is a 125-amino-acid chain: Ribonuclease pancreatic (125 aa).

Substrate-binding residues include Lys-7 and Arg-10. His-12 (proton acceptor) is an active-site residue. Intrachain disulfides connect Cys-27–Cys-85, Cys-41–Cys-96, Cys-59–Cys-111, and Cys-66–Cys-73. Asn-35 carries N-linked (GlcNAc...) asparagine glycosylation. Residues 42-46, Lys-67, and Arg-86 each bind substrate; that span reads KPVNT. His-120 serves as the catalytic Proton donor.

The protein belongs to the pancreatic ribonuclease family. As to quaternary structure, monomer. Interacts with and forms tight 1:1 complexes with RNH1. Dimerization of two such complexes may occur. Interaction with RNH1 inhibits this protein. As to expression, pancreas.

The protein localises to the secreted. It catalyses the reaction an [RNA] containing cytidine + H2O = an [RNA]-3'-cytidine-3'-phosphate + a 5'-hydroxy-ribonucleotide-3'-[RNA].. The enzyme catalyses an [RNA] containing uridine + H2O = an [RNA]-3'-uridine-3'-phosphate + a 5'-hydroxy-ribonucleotide-3'-[RNA].. In terms of biological role, endonuclease that catalyzes the cleavage of RNA on the 3' side of pyrimidine nucleotides. Acts on single-stranded and double-stranded RNA. The chain is Ribonuclease pancreatic (RNASE1) from Spalax ehrenbergi (Middle East blind mole rat).